The following is a 1167-amino-acid chain: White collar 1 protein (1167 aa).

2 disordered regions span residues 1-91 (MNNN…MSGG) and 307-355 (STPA…GASQ). Low complexity predominate over residues 21-57 (QHQQQQQQQQQQQQQQQQQQQQQQQQQQQQHQHQQQQ). Composition is skewed to polar residues over residues 70 to 91 (TPPT…MSGG) and 307 to 325 (STPA…TQTI). A compositionally biased stretch (low complexity) spans 335 to 348 (VTNAPTPAPFTSTP). Residues 381–452 (KLKLGAVDMS…KREFVENNAV (72 aa)) form the PAS 1 domain. The residue at position 428 (Cys-428) is an S-4a-FMN cysteine. The PAC 1 domain occupies 469 to 508 (LINYRKGGKPFLNLLTMIPIPWDTEEIRYFIGFQIDLVEC). The PAS 2 domain maps to 574–644 (KQSWDKMLLE…RELKEAQQHT (71 aa)). The PAC 2 domain maps to 650–691 (FRIRRKNSGYTWFESHGTLFNEQGKGRKCIILVGRKRPVFAL). The region spanning 693–763 (RKDLELNGGI…RTIEKARKGK (71 aa)) is the PAS 3 domain. Low complexity predominate over residues 849–861 (MSKSGSSDSTGAM). 4 disordered regions span residues 849–872 (MSKS…GPGQ), 918–952 (KKKR…PSGN), 966–1047 (QTGR…TGST), and 1060–1167 (VNAL…GLSV). The GATA-type zinc-finger motif lies at 934–959 (CANCHTRNTPEWRRGPSGNRDLCNSC). The span at 968–977 (GRVSPRTSSR) shows a compositional bias: polar residues. Residues 986-995 (KKSNSPSHSS) show a composition bias toward low complexity. The segment covering 1004-1033 (DSPSTTTATKNSPSLRGSSTTAPGTITTDS) has biased composition (polar residues). Low complexity-rich tracts occupy residues 1036–1047 (AVASSASGTGST) and 1104–1128 (QHQQ…QQHQ).

Heterodimer of wc-1 and wc-2. Post-translationally, FMN binds covalently to cysteine after exposure to blue light and is reversed in the dark.

It localises to the nucleus. Its function is as follows. May function as a transcription factor involved in light regulation. Binds and affects blue light regulation of the al-3 gene. Wc-1 and wc-2 proteins interact via homologous PAS domains, bind to promoters of light regulated genes such as frq, and activate transcription. This is White collar 1 protein (wc-1) from Neurospora crassa (strain ATCC 24698 / 74-OR23-1A / CBS 708.71 / DSM 1257 / FGSC 987).